We begin with the raw amino-acid sequence, 145 residues long: Bacilliredoxin ABC2045 (145 aa).

Belongs to the bacilliredoxin family.

This chain is Bacilliredoxin ABC2045, found in Shouchella clausii (strain KSM-K16) (Alkalihalobacillus clausii).